Reading from the N-terminus, the 155-residue chain is Urease accessory protein UreE (155 aa).

It belongs to the UreE family.

It is found in the cytoplasm. Functionally, involved in urease metallocenter assembly. Binds nickel. Probably functions as a nickel donor during metallocenter assembly. In Deinococcus radiodurans (strain ATCC 13939 / DSM 20539 / JCM 16871 / CCUG 27074 / LMG 4051 / NBRC 15346 / NCIMB 9279 / VKM B-1422 / R1), this protein is Urease accessory protein UreE.